A 547-amino-acid chain; its full sequence is Probable bifunctional tRNA threonylcarbamoyladenosine biosynthesis protein (547 aa).

Positions 1–329 are kae1; that stretch reads MKNTFILGIE…FRTDDVNVTW (329 aa). Fe cation-binding residues include histidine 113, histidine 117, and tyrosine 134. L-threonylcarbamoyladenylate-binding positions include 134–138, aspartate 166, glycine 179, glutamate 183, and asparagine 262; that span reads YVSGA. Aspartate 290 contributes to the Fe cation binding site. The 208-residue stretch at 340 to 547 folds into the Protein kinase domain; the sequence is EISPEAFLRA…EEIKKRARYA (208 aa). ATP contacts are provided by residues 355–363 and lysine 377; that span reads LDNGAEAVI. Residue aspartate 464 is the Proton acceptor; for kinase activity of the active site.

It in the N-terminal section; belongs to the KAE1 / TsaD family. In the C-terminal section; belongs to the protein kinase superfamily. Tyr protein kinase family. BUD32 subfamily. Component of the KEOPS complex that consists of Kae1, Bud32, Cgi121 and Pcc1; the whole complex dimerizes. Fe(2+) serves as cofactor.

The protein resides in the cytoplasm. The catalysed reaction is L-seryl-[protein] + ATP = O-phospho-L-seryl-[protein] + ADP + H(+). It catalyses the reaction L-threonyl-[protein] + ATP = O-phospho-L-threonyl-[protein] + ADP + H(+). It carries out the reaction L-threonylcarbamoyladenylate + adenosine(37) in tRNA = N(6)-L-threonylcarbamoyladenosine(37) in tRNA + AMP + H(+). Required for the formation of a threonylcarbamoyl group on adenosine at position 37 (t(6)A37) in tRNAs that read codons beginning with adenine. Is a component of the KEOPS complex that is probably involved in the transfer of the threonylcarbamoyl moiety of threonylcarbamoyl-AMP (TC-AMP) to the N6 group of A37. The Kae1 domain likely plays a direct catalytic role in this reaction. The Bud32 domain probably displays kinase activity that regulates Kae1 function. The polypeptide is Probable bifunctional tRNA threonylcarbamoyladenosine biosynthesis protein (Methanosarcina acetivorans (strain ATCC 35395 / DSM 2834 / JCM 12185 / C2A)).